The following is a 54-amino-acid chain: uncharacterized protein (54 aa).

Basic and acidic residues-rich tracts occupy residues 1 to 19 (MTEKKQQNKPNENPEHNDL) and 26 to 54 (EELKENMNDEKHKRQQRDNSQSERDYDTK). The disordered stretch occupies residues 1–54 (MTEKKQQNKPNENPEHNDLTDPIPNEELKENMNDEKHKRQQRDNSQSERDYDTK).

This is an uncharacterized protein from Bacillus subtilis (strain 168).